Reading from the N-terminus, the 264-residue chain is Carbonic anhydrase (264 aa).

The tat-type signal signal peptide spans 1-33; the sequence is MSSTLYRRQLLKLLGMSVLGTSFSSCVTSPARA. Residues 36 to 264 form the Alpha-carbonic anhydrase domain; it reads VNWGYIGKVG…LNDRLVIEAI (229 aa). Zn(2+) contacts are provided by H127, H129, and H146. 214 to 215 is a binding site for substrate; sequence TT.

Belongs to the alpha-carbonic anhydrase family. The cofactor is Zn(2+). In terms of processing, predicted to be exported by the Tat system. The position of the signal peptide cleavage has not been experimentally proven.

It carries out the reaction hydrogencarbonate + H(+) = CO2 + H2O. Functionally, reversible hydration of carbon dioxide. The chain is Carbonic anhydrase (ecaA) from Nostoc sp. (strain PCC 7120 / SAG 25.82 / UTEX 2576).